Here is a 378-residue protein sequence, read N- to C-terminus: Histidinol-phosphate aminotransferase (378 aa).

The interval 1 to 20 (MSVSAKETQRHPARPEPRPG) is disordered. Residues 7 to 17 (ETQRHPARPEP) are compositionally biased toward basic and acidic residues. Lys-232 carries the N6-(pyridoxal phosphate)lysine modification.

This sequence belongs to the class-II pyridoxal-phosphate-dependent aminotransferase family. Histidinol-phosphate aminotransferase subfamily. Homodimer. It depends on pyridoxal 5'-phosphate as a cofactor.

The catalysed reaction is L-histidinol phosphate + 2-oxoglutarate = 3-(imidazol-4-yl)-2-oxopropyl phosphate + L-glutamate. Its pathway is amino-acid biosynthesis; L-histidine biosynthesis; L-histidine from 5-phospho-alpha-D-ribose 1-diphosphate: step 7/9. This Azorhizobium caulinodans (strain ATCC 43989 / DSM 5975 / JCM 20966 / LMG 6465 / NBRC 14845 / NCIMB 13405 / ORS 571) protein is Histidinol-phosphate aminotransferase.